The chain runs to 309 residues: Tagatose-6-phosphate kinase (309 aa).

Belongs to the carbohydrate kinase PfkB family. LacC subfamily.

The catalysed reaction is D-tagatofuranose 6-phosphate + ATP = D-tagatofuranose 1,6-bisphosphate + ADP + H(+). It functions in the pathway carbohydrate metabolism; D-tagatose 6-phosphate degradation; D-glyceraldehyde 3-phosphate and glycerone phosphate from D-tagatose 6-phosphate: step 1/2. This Streptococcus pneumoniae (strain P1031) protein is Tagatose-6-phosphate kinase.